The sequence spans 296 residues: N-acetylmuramic acid 6-phosphate etherase (296 aa).

An SIS domain is found at 54–217 (VIASFQQGGR…STTAMVGIGK (164 aa)). Glu82 (proton donor) is an active-site residue. The active site involves Glu113.

The protein belongs to the GCKR-like family. MurNAc-6-P etherase subfamily. Homodimer.

It carries out the reaction N-acetyl-D-muramate 6-phosphate + H2O = N-acetyl-D-glucosamine 6-phosphate + (R)-lactate. Its pathway is amino-sugar metabolism; N-acetylmuramate degradation. Functionally, specifically catalyzes the cleavage of the D-lactyl ether substituent of MurNAc 6-phosphate, producing GlcNAc 6-phosphate and D-lactate. The protein is N-acetylmuramic acid 6-phosphate etherase of Shouchella clausii (strain KSM-K16) (Alkalihalobacillus clausii).